Consider the following 544-residue polypeptide: Cytochrome P450 2U1 (544 aa).

A run of 4 helical transmembrane segments spans residues 30–50, 113–133, 261–281, and 342–362; these read LDPS…GWSW, VYGS…LSDF, ICLN…YLPF, and LFYI…NSLL. Cys490 contributes to the heme binding site. Residues 495-515 traverse the membrane as a helical segment; sequence LAKMELFLMFVSLMQSFAFAL.

Belongs to the cytochrome P450 family. Requires heme as cofactor. Widely expressed with stronger expression in thymus, heart and cerebellum.

It is found in the endoplasmic reticulum membrane. It localises to the microsome membrane. The protein resides in the mitochondrion inner membrane. It catalyses the reaction an omega-methyl-long-chain fatty acid + reduced [NADPH--hemoprotein reductase] + O2 = an omega-hydroxy-long-chain fatty acid + oxidized [NADPH--hemoprotein reductase] + H2O + H(+). It carries out the reaction (5Z,8Z,11Z,14Z)-eicosatetraenoate + reduced [NADPH--hemoprotein reductase] + O2 = 19-hydroxy-(5Z,8Z,11Z,14Z)-eicosatetraenoate + oxidized [NADPH--hemoprotein reductase] + H2O + H(+). The catalysed reaction is (5Z,8Z,11Z,14Z)-eicosatetraenoate + reduced [NADPH--hemoprotein reductase] + O2 = 20-hydroxy-(5Z,8Z,11Z,14Z)-eicosatetraenoate + oxidized [NADPH--hemoprotein reductase] + H2O + H(+). The enzyme catalyses N-[(5Z,8Z,11Z,14Z)-eicosatetraenoyl]-serotonin + reduced [NADPH--hemoprotein reductase] + O2 = 2-oxo-N-[(5Z,8Z,11Z,14Z)-eicosatetraenoyl]-serotonin + oxidized [NADPH--hemoprotein reductase] + H2O + H(+). The protein operates within lipid metabolism; arachidonate metabolism. In terms of biological role, a cytochrome P450 monooxygenase involved in the metabolism of arachidonic acid and its conjugates. Mechanistically, uses molecular oxygen inserting one oxygen atom into a substrate, and reducing the second into a water molecule, with two electrons provided by NADPH via cytochrome P450 reductase (CPR; NADPH-ferrihemoprotein reductase). Acts as an omega and omega-1 hydroxylase for arachidonic acid and possibly for other long chain fatty acids. May modulate the arachidonic acid signaling pathway and play a role in other fatty acid signaling processes. May down-regulate the biological activities of N-arachidonoyl-serotonin, an endocannabinoid that has anti-nociceptive effects through inhibition of fatty acid amide hydrolase FAAH, TRPV1 receptor and T-type calcium channels. Catalyzes C-2 oxidation of the indole ring of N-arachidonoyl-serotonin forming a less active product 2-oxo-N-arachidonoyl-serotonin. This Homo sapiens (Human) protein is Cytochrome P450 2U1.